The chain runs to 98 residues: Large ribosomal subunit protein uL23 (98 aa).

It belongs to the universal ribosomal protein uL23 family. Part of the 50S ribosomal subunit. Contacts protein L29, and trigger factor when it is bound to the ribosome.

Functionally, one of the early assembly proteins it binds 23S rRNA. One of the proteins that surrounds the polypeptide exit tunnel on the outside of the ribosome. Forms the main docking site for trigger factor binding to the ribosome. The chain is Large ribosomal subunit protein uL23 from Streptococcus pneumoniae serotype 19F (strain G54).